The chain runs to 574 residues: GRB2-associated-binding protein 4 (574 aa).

Positions 1 to 33 are disordered; it reads MSLPSPSPSRELCPPDPAFAPLSSWPGSGPAGG. In terms of domain architecture, PH spans 39-152; it reads HVLYSGWLRK…WVQSICQICG (114 aa). 4 disordered regions span residues 176–200, 215–234, 293–331, and 418–513; these read PAEP…PVSH, LRSH…ASFS, SLAS…RPAE, and PPVN…PRST. Positions 181–193 are enriched in polar residues; the sequence is CSHQHLPQEQEPT. 2 stretches are compositionally biased toward polar residues: residues 302–318 and 424–442; these read GSLT…SGKY and LKPN…NNRV. Positions 457–478 are enriched in low complexity; sequence SGTSHTFDSSSSQHPISTQSIT. A compositionally biased stretch (polar residues) spans 502 to 513; the sequence is GGTSSSAPPRST.

It belongs to the GAB family.

The sequence is that of GRB2-associated-binding protein 4 (GAB4) from Homo sapiens (Human).